The chain runs to 210 residues: Large ribosomal subunit protein bL25 (210 aa).

Residues 1 to 23 are disordered; that stretch reads MSDIGTLSAKGRDRAGKGAARAT.

This sequence belongs to the bacterial ribosomal protein bL25 family. CTC subfamily. As to quaternary structure, part of the 50S ribosomal subunit; part of the 5S rRNA/L5/L18/L25 subcomplex. Contacts the 5S rRNA. Binds to the 5S rRNA independently of L5 and L18.

Functionally, this is one of the proteins that binds to the 5S RNA in the ribosome where it forms part of the central protuberance. The polypeptide is Large ribosomal subunit protein bL25 (Rhodospirillum rubrum (strain ATCC 11170 / ATH 1.1.1 / DSM 467 / LMG 4362 / NCIMB 8255 / S1)).